The following is a 210-amino-acid chain: Large ribosomal subunit protein uL3 (210 aa).

Residues 133–156 (ASHGNSLSHRVPGSIGQNQTPGKV) form a disordered region. An N5-methylglutamine modification is found at Q151.

This sequence belongs to the universal ribosomal protein uL3 family. In terms of assembly, part of the 50S ribosomal subunit. Forms a cluster with proteins L14 and L19. Methylated by PrmB.

One of the primary rRNA binding proteins, it binds directly near the 3'-end of the 23S rRNA, where it nucleates assembly of the 50S subunit. In Hamiltonella defensa subsp. Acyrthosiphon pisum (strain 5AT), this protein is Large ribosomal subunit protein uL3.